The sequence spans 159 residues: Ribosomal RNA large subunit methyltransferase H (159 aa).

S-adenosyl-L-methionine contacts are provided by residues L76, G108, and F127 to L132.

Belongs to the RNA methyltransferase RlmH family. As to quaternary structure, homodimer.

Its subcellular location is the cytoplasm. The catalysed reaction is pseudouridine(1915) in 23S rRNA + S-adenosyl-L-methionine = N(3)-methylpseudouridine(1915) in 23S rRNA + S-adenosyl-L-homocysteine + H(+). Its function is as follows. Specifically methylates the pseudouridine at position 1915 (m3Psi1915) in 23S rRNA. The sequence is that of Ribosomal RNA large subunit methyltransferase H from Streptococcus mutans serotype c (strain ATCC 700610 / UA159).